Here is a 208-residue protein sequence, read N- to C-terminus: dITP/XTP pyrophosphatase (208 aa).

Position 7-12 (7-12) interacts with substrate; it reads SNNAKK. Mg(2+) is bound by residues glutamate 39 and aspartate 68. The active-site Proton acceptor is the aspartate 68. Substrate is bound by residues serine 69, 162–165, lysine 185, and 190–191; these read FGYD and HR.

The protein belongs to the HAM1 NTPase family. In terms of assembly, homodimer. Requires Mg(2+) as cofactor.

The catalysed reaction is XTP + H2O = XMP + diphosphate + H(+). The enzyme catalyses dITP + H2O = dIMP + diphosphate + H(+). It catalyses the reaction ITP + H2O = IMP + diphosphate + H(+). Functionally, pyrophosphatase that catalyzes the hydrolysis of nucleoside triphosphates to their monophosphate derivatives, with a high preference for the non-canonical purine nucleotides XTP (xanthosine triphosphate), dITP (deoxyinosine triphosphate) and ITP. Seems to function as a house-cleaning enzyme that removes non-canonical purine nucleotides from the nucleotide pool, thus preventing their incorporation into DNA/RNA and avoiding chromosomal lesions. The sequence is that of dITP/XTP pyrophosphatase from Methylibium petroleiphilum (strain ATCC BAA-1232 / LMG 22953 / PM1).